The primary structure comprises 344 residues: Selenide, water dikinase (344 aa).

Cysteine 16 is a catalytic residue. ATP-binding positions include lysine 19 and 47-49 (SRD). Residue aspartate 50 coordinates Mg(2+). ATP-binding positions include aspartate 67, aspartate 90, and 138–140 (GHS). Aspartate 90 contacts Mg(2+). Aspartate 226 serves as a coordination point for Mg(2+).

It belongs to the selenophosphate synthase 1 family. Class I subfamily. As to quaternary structure, homodimer. Mg(2+) is required as a cofactor.

It catalyses the reaction hydrogenselenide + ATP + H2O = selenophosphate + AMP + phosphate + 2 H(+). Functionally, synthesizes selenophosphate from selenide and ATP. In Pseudomonas aeruginosa (strain ATCC 15692 / DSM 22644 / CIP 104116 / JCM 14847 / LMG 12228 / 1C / PRS 101 / PAO1), this protein is Selenide, water dikinase.